Reading from the N-terminus, the 137-residue chain is Probable leaf thionin (137 aa).

The signal sequence occupies residues 1 to 28 (MATNKSIKSVVICVLILGLVLEQVQVEG). Cystine bridges form between Cys31/Cys68, Cys32/Cys60, Cys40/Cys58, and Cys44/Cys54. A propeptide spans 75–137 (LNLLPESGEP…DGDVIQSVEA (63 aa)) (acidic domain).

It belongs to the plant thionin (TC 1.C.44) family. 4 C-C subfamily.

It localises to the secreted. Thionins are small plant proteins which are toxic to animal cells. They seem to exert their toxic effect at the level of the cell membrane. Their precise function is not known. The polypeptide is Probable leaf thionin (Hordeum vulgare (Barley)).